A 229-amino-acid polypeptide reads, in one-letter code: Urease accessory protein UreF (229 aa).

It belongs to the UreF family. In terms of assembly, ureD, UreF and UreG form a complex that acts as a GTP-hydrolysis-dependent molecular chaperone, activating the urease apoprotein by helping to assemble the nickel containing metallocenter of UreC. The UreE protein probably delivers the nickel.

It localises to the cytoplasm. Functionally, required for maturation of urease via the functional incorporation of the urease nickel metallocenter. The polypeptide is Urease accessory protein UreF (Corynebacterium efficiens (strain DSM 44549 / YS-314 / AJ 12310 / JCM 11189 / NBRC 100395)).